The following is a 430-amino-acid chain: Enolase (430 aa).

Gln-167 is a (2R)-2-phosphoglycerate binding site. The active-site Proton donor is the Glu-209. 3 residues coordinate Mg(2+): Asp-246, Glu-289, and Asp-316. Residues Lys-341, Arg-370, Ser-371, and Lys-392 each contribute to the (2R)-2-phosphoglycerate site. Residue Lys-341 is the Proton acceptor of the active site.

This sequence belongs to the enolase family. As to quaternary structure, component of the RNA degradosome, a multiprotein complex involved in RNA processing and mRNA degradation. Requires Mg(2+) as cofactor.

The protein resides in the cytoplasm. Its subcellular location is the secreted. It localises to the cell surface. It catalyses the reaction (2R)-2-phosphoglycerate = phosphoenolpyruvate + H2O. It functions in the pathway carbohydrate degradation; glycolysis; pyruvate from D-glyceraldehyde 3-phosphate: step 4/5. Catalyzes the reversible conversion of 2-phosphoglycerate (2-PG) into phosphoenolpyruvate (PEP). It is essential for the degradation of carbohydrates via glycolysis. The chain is Enolase from Alteromonas mediterranea (strain DSM 17117 / CIP 110805 / LMG 28347 / Deep ecotype).